Reading from the N-terminus, the 215-residue chain is Cytochrome b6 (215 aa).

A helical transmembrane segment spans residues 32–52; that stretch reads IFYCLGGITLTCFIIQVATGF. Heme c is bound at residue cysteine 35. 2 residues coordinate heme b: histidine 86 and histidine 100. Transmembrane regions (helical) follow at residues 90 to 110, 116 to 136, and 186 to 206; these read ASMMVLMMILHVFRVYLTGGF, LTWVTGVILGVLTVSFGVTGY, and LHTFVLPLLTAVFMLMHFLMI. Histidine 187 and histidine 202 together coordinate heme b.

It belongs to the cytochrome b family. PetB subfamily. The 4 large subunits of the cytochrome b6-f complex are cytochrome b6, subunit IV (17 kDa polypeptide, PetD), cytochrome f and the Rieske protein, while the 4 small subunits are PetG, PetL, PetM and PetN. The complex functions as a dimer. It depends on heme b as a cofactor. The cofactor is heme c.

The protein localises to the plastid. It is found in the chloroplast thylakoid membrane. Functionally, component of the cytochrome b6-f complex, which mediates electron transfer between photosystem II (PSII) and photosystem I (PSI), cyclic electron flow around PSI, and state transitions. This is Cytochrome b6 from Zygnema circumcarinatum (Green alga).